A 538-amino-acid polypeptide reads, in one-letter code: Phosphoenolpyruvate carboxykinase (ATP) (538 aa).

Arg-64 is a binding site for substrate. Residue Arg-152 participates in ATP binding. Substrate is bound by residues Tyr-205 and Lys-211. ATP is bound by residues Lys-211, His-230, and 246-254 (GLSGTGKTT). The Mn(2+) site is built by Lys-211 and His-230. Asp-267 is a binding site for Mn(2+). ATP contacts are provided by residues Glu-295, Arg-331, Arg-344, 447–448 (RI), and Thr-453. A substrate-binding site is contributed by Arg-331.

It belongs to the phosphoenolpyruvate carboxykinase (ATP) family. In terms of assembly, monomer. Mn(2+) is required as a cofactor.

It localises to the cytoplasm. The enzyme catalyses oxaloacetate + ATP = phosphoenolpyruvate + ADP + CO2. It functions in the pathway carbohydrate biosynthesis; gluconeogenesis. Involved in gluconeogenesis. Catalyzes the conversion of oxaloacetate (OAA) to phosphoenolpyruvate (PEP) through direct phosphoryl transfer between the nucleoside triphosphate and OAA. In Actinobacillus succinogenes (strain ATCC 55618 / DSM 22257 / CCUG 43843 / 130Z), this protein is Phosphoenolpyruvate carboxykinase (ATP).